We begin with the raw amino-acid sequence, 467 residues long: GTPase Obg (467 aa).

In terms of domain architecture, Obg spans 1–158; that stretch reads MFYDEAKIFV…RWLRLELKLL (158 aa). In terms of domain architecture, OBG-type G spans 159-333; it reads ADVGLVGLPN…LIRATWERLQ (175 aa). GTP-binding positions include 165–172, 190–194, 214–217, 285–288, and 314–316; these read GLPNAGKS, FTTLE, DLPG, NKMD, and SAA. The Mg(2+) site is built by Ser172 and Thr192. One can recognise an OCT domain in the interval 352–430; that stretch reads TLDRSQERWE…VAGRELVWEP (79 aa).

It belongs to the TRAFAC class OBG-HflX-like GTPase superfamily. OBG GTPase family. Monomer. Mg(2+) serves as cofactor.

The protein localises to the cytoplasm. Functionally, an essential GTPase which binds GTP, GDP and possibly (p)ppGpp with moderate affinity, with high nucleotide exchange rates and a fairly low GTP hydrolysis rate. Plays a role in control of the cell cycle, stress response, ribosome biogenesis and in those bacteria that undergo differentiation, in morphogenesis control. This Thermomicrobium roseum (strain ATCC 27502 / DSM 5159 / P-2) protein is GTPase Obg.